Reading from the N-terminus, the 254-residue chain is Methyl-CpG-binding domain-containing protein 11 (254 aa).

Positions 4-74 (EEEVVSVELP…AEFDWTTSGT (71 aa)) constitute an MBD domain. The segment at 56–254 (KSHPGNPAIA…EKTAEGEATG (199 aa)) is disordered. 4 stretches are compositionally biased toward basic and acidic residues: residues 80 to 97 (RISE…EPPK), 107 to 130 (SKKD…KDTE), 151 to 162 (ETERVNDAKENI), and 178 to 254 (ESMK…EATG). Position 116 is a phosphoserine (Ser-116).

In terms of tissue distribution, expressed in leaves (around hydathodes), buds, flowers (carpels and pollen grains), stems (around nodes), siliques, mature seeds and roots.

The protein localises to the nucleus. Transcriptional regulator that binds DNA independently of its methylation status. Required during plant organogenesis and development. The protein is Methyl-CpG-binding domain-containing protein 11 (MBD11) of Arabidopsis thaliana (Mouse-ear cress).